A 78-amino-acid chain; its full sequence is Large ribosomal subunit protein bL28 (78 aa).

Positions 1-21 (MSRVCQVTGKKPMVGNNRSHA) are disordered.

It belongs to the bacterial ribosomal protein bL28 family.

This chain is Large ribosomal subunit protein bL28, found in Shewanella baltica (strain OS223).